Here is a 257-residue protein sequence, read N- to C-terminus: Phosphonates import ATP-binding protein PhnC (257 aa).

The ABC transporter domain maps to Ile-4–Ile-248. Gly-37 to Ser-44 is an ATP binding site.

The protein belongs to the ABC transporter superfamily. Phosphonates importer (TC 3.A.1.9.1) family. The complex is composed of two ATP-binding proteins (PhnC), two transmembrane proteins (PhnE) and a solute-binding protein (PhnD).

It localises to the cell membrane. The enzyme catalyses phosphonate(out) + ATP + H2O = phosphonate(in) + ADP + phosphate + H(+). Part of the ABC transporter complex PhnCDE involved in phosphonates import. Responsible for energy coupling to the transport system. The protein is Phosphonates import ATP-binding protein PhnC of Staphylococcus aureus (strain MRSA252).